A 174-amino-acid chain; its full sequence is ATP-dependent protease subunit HslV (174 aa).

The active site involves threonine 2. Na(+) is bound by residues glycine 157, cysteine 160, and threonine 163.

The protein belongs to the peptidase T1B family. HslV subfamily. In terms of assembly, a double ring-shaped homohexamer of HslV is capped on each side by a ring-shaped HslU homohexamer. The assembly of the HslU/HslV complex is dependent on binding of ATP.

The protein localises to the cytoplasm. It catalyses the reaction ATP-dependent cleavage of peptide bonds with broad specificity.. Its activity is regulated as follows. Allosterically activated by HslU binding. Functionally, protease subunit of a proteasome-like degradation complex believed to be a general protein degrading machinery. The chain is ATP-dependent protease subunit HslV from Shewanella pealeana (strain ATCC 700345 / ANG-SQ1).